A 330-amino-acid polypeptide reads, in one-letter code: 4-hydroxythreonine-4-phosphate dehydrogenase (330 aa).

Histidine 136 and threonine 137 together coordinate substrate. Residues histidine 166, histidine 211, and histidine 266 each contribute to the a divalent metal cation site. Residues lysine 274, asparagine 283, and arginine 292 each contribute to the substrate site.

This sequence belongs to the PdxA family. Homodimer. Zn(2+) is required as a cofactor. The cofactor is Mg(2+). It depends on Co(2+) as a cofactor.

It is found in the cytoplasm. The catalysed reaction is 4-(phosphooxy)-L-threonine + NAD(+) = 3-amino-2-oxopropyl phosphate + CO2 + NADH. It functions in the pathway cofactor biosynthesis; pyridoxine 5'-phosphate biosynthesis; pyridoxine 5'-phosphate from D-erythrose 4-phosphate: step 4/5. Its function is as follows. Catalyzes the NAD(P)-dependent oxidation of 4-(phosphooxy)-L-threonine (HTP) into 2-amino-3-oxo-4-(phosphooxy)butyric acid which spontaneously decarboxylates to form 3-amino-2-oxopropyl phosphate (AHAP). This Sodalis glossinidius (strain morsitans) protein is 4-hydroxythreonine-4-phosphate dehydrogenase.